The chain runs to 344 residues: MRKSVKVGKVVIGGEAPVSVQSMTTTKTADVEKTVSQIKSLERAGCEIVRVAVQDEEDAKAIRRIKEQIEIPLVADIQFDYRLAILSIENGADKIRINPGNMSRDRLKDVVAAAKGKGIPIRVGANVGSIKRRTSERWKDLAESALEEVRLLEKEGFYDIIVSVKSSDVLETIKANEYIAEKVEYPIHLGVTEAGVSETAIVKSSIAIGHLLLKNIGDTIRVSISGDPVREVIVGKKILIALGLREGVEVIACPTCGRAEIDVENMAKMIEENFFHVQKRLKIAVMGCVVNGIGEGKDADLGVAGLRDGAVIFVKGEIKERVSKEFVLERLKYYLNELLEEVER.

Cys-253, Cys-256, Cys-288, and Glu-295 together coordinate [4Fe-4S] cluster.

It belongs to the IspG family. Requires [4Fe-4S] cluster as cofactor.

The catalysed reaction is (2E)-4-hydroxy-3-methylbut-2-enyl diphosphate + oxidized [flavodoxin] + H2O + 2 H(+) = 2-C-methyl-D-erythritol 2,4-cyclic diphosphate + reduced [flavodoxin]. The protein operates within isoprenoid biosynthesis; isopentenyl diphosphate biosynthesis via DXP pathway; isopentenyl diphosphate from 1-deoxy-D-xylulose 5-phosphate: step 5/6. Functionally, converts 2C-methyl-D-erythritol 2,4-cyclodiphosphate (ME-2,4cPP) into 1-hydroxy-2-methyl-2-(E)-butenyl 4-diphosphate. The polypeptide is 4-hydroxy-3-methylbut-2-en-1-yl diphosphate synthase (flavodoxin) (Thermotoga maritima (strain ATCC 43589 / DSM 3109 / JCM 10099 / NBRC 100826 / MSB8)).